Consider the following 345-residue polypeptide: Alpha-N-acetylneuraminide alpha-2,8-sialyltransferase (345 aa).

The Cytoplasmic portion of the chain corresponds to 1–15; the sequence is MKLQGSRMWLCPRTR. Residues 16 to 36 form a helical; Signal-anchor for type II membrane protein membrane-spanning segment; it reads LPVGASALGFLILCWLYVFPG. Over 37–345 the chain is Lumenal; it reads YRLPGHKEMV…KKDVSSQKPH (309 aa). 2 N-linked (GlcNAc...) asparagine glycosylation sites follow: Asn59 and Asn107. Cystine bridges form between Cys126-Cys275 and Cys140-Cys335. The CMP-N-acetyl-beta-neuraminate site is built by Asn131 and Asn154. Residues Asn154 and 176-178 each bind substrate; that span reads NPS. Residue Asn233 is glycosylated (N-linked (GlcNAc...) asparagine). The CMP-N-acetyl-beta-neuraminate site is built by Ser262, Thr263, Gly264, Trp284, and His298. 262 to 264 serves as a coordination point for substrate; that stretch reads STG. Residue His310 is the Proton donor/acceptor of the active site.

Belongs to the glycosyltransferase 29 family.

It is found in the golgi apparatus membrane. The enzyme catalyses an N-acetyl-alpha-neuraminyl-(2-&gt;3)-beta-D-galactosyl derivative + CMP-N-acetyl-beta-neuraminate = an N-acetyl-alpha-neuraminyl-(2-&gt;8)-N-acetyl-alpha-neuraminyl-(2-&gt;3)-beta-D-galactosyl derivative + CMP + H(+). It catalyses the reaction a ganglioside GM3 (d18:1(4E)) + CMP-N-acetyl-beta-neuraminate = a ganglioside GD3 (d18:1(4E)) + CMP + H(+). The catalysed reaction is a ganglioside GD3 (d18:1(4E)) + CMP-N-acetyl-beta-neuraminate = a ganglioside GT3 (d18:1(4E)) + CMP + H(+). It carries out the reaction a ganglioside GD1a (d18:1(4E)) + CMP-N-acetyl-beta-neuraminate = a ganglioside GT1a (d18:1(4E)) + CMP + H(+). The enzyme catalyses a ganglioside GT1b (d18:1(4E)) + CMP-N-acetyl-beta-neuraminate = a ganglioside GQ1b (d18:1(4E)) + CMP + H(+). It catalyses the reaction a ganglioside GM1b (d18:1(4E)) + CMP-N-acetyl-beta-neuraminate = a ganglioside GD1c (d18:1(4E)) + CMP + H(+). The catalysed reaction is a ganglioside GD3 + CMP-N-acetyl-beta-neuraminate = a ganglioside GT3 + CMP + H(+). It carries out the reaction [alpha-N-acetylneuraminyl-(2-&gt;8)](n)-alpha-N-acetylneuraminyl-(2-&gt;8)-alpha-N-acetylneuraminyl-(2-&gt;3)-beta-D-galactosyl-(1-&gt;4)-beta-D-glucosyl-(1&lt;-&gt;1)-ceramide + CMP-N-acetyl-beta-neuraminate = [alpha-N-acetylneuraminyl-(2-&gt;8)](n+1)-alpha-N-acetylneuraminyl-(2-&gt;8)-alpha-N-acetylneuraminyl-(2-&gt;3)-beta-D-galactosyl-(1-&gt;4)-beta-D-glucosyl-(1&lt;-&gt;1)-ceramide + CMP + H(+). The protein operates within protein modification; protein glycosylation. It functions in the pathway lipid metabolism; sphingolipid metabolism. Catalyzes the addition of sialic acid in alpha 2,8-linkage to the sialic acid moiety of the ganglioside GM3 to form ganglioside GD3; gangliosides are a subfamily of complex glycosphingolipds that contain one or more residues of sialic acid. Glycosphingolipids are required for convergence extension movements during early development. Can catalyze the addition of a second alpha-2,8- sialic acid to GD3 to form GT3. Can use GM1b, GD1a and GT1b as acceptor substrates to synthesize GD1c, GT1a and GQ1b respectively. The sequence is that of Alpha-N-acetylneuraminide alpha-2,8-sialyltransferase from Xenopus tropicalis (Western clawed frog).